A 334-amino-acid chain; its full sequence is MFRLLLICITFLALYFGFTFIKHFDSKVVISLYDYNIETTLFLSVILGLLLLVSCFIIIRFLIIIIDLPATIHIMFSKRKINHDRHAVILAFAEYIIGNKMKAASIARKNLSSEDLKDFQEFHNFILAVTAEDIDSKISYFQKLITSKTFVFYASKNLAKLYYDKSLYDKAENYAIKAYNLNELDSDNLITLMHCYAKLSLWSKFIFITNKLAKFHKHEFVPKITQYYLLIAKQEVENNNTANAIDYLEKAIDLNFYNDELLEFYFNLNDKLSVNQKTKILKEAFRIAPSLRLVQLFKKITSLSDKQIYEELTQVLDTQKDKIFILAIEAYLEL.

2 helical membrane passes run 1-21 and 46-66; these read MFRL…FTFI and ILGL…IIII.

Its subcellular location is the cell membrane. This is an uncharacterized protein from Rickettsia prowazekii (strain Madrid E).